The chain runs to 322 residues: Lipoyl synthase (322 aa).

Over residues 1-14 (MKTLDENQAPSRQT) the composition is skewed to polar residues. Positions 1–30 (MKTLDENQAPSRQTPESHRRGAEKLSRIPV) are disordered. Positions 15–26 (PESHRRGAEKLS) are enriched in basic and acidic residues. Residues C70, C75, C81, C96, C100, C103, and S310 each coordinate [4Fe-4S] cluster. A Radical SAM core domain is found at 82-299 (FGHGTATFMI…AGYARELGFA (218 aa)).

The protein belongs to the radical SAM superfamily. Lipoyl synthase family. [4Fe-4S] cluster serves as cofactor.

The protein localises to the cytoplasm. It catalyses the reaction [[Fe-S] cluster scaffold protein carrying a second [4Fe-4S](2+) cluster] + N(6)-octanoyl-L-lysyl-[protein] + 2 oxidized [2Fe-2S]-[ferredoxin] + 2 S-adenosyl-L-methionine + 4 H(+) = [[Fe-S] cluster scaffold protein] + N(6)-[(R)-dihydrolipoyl]-L-lysyl-[protein] + 4 Fe(3+) + 2 hydrogen sulfide + 2 5'-deoxyadenosine + 2 L-methionine + 2 reduced [2Fe-2S]-[ferredoxin]. It functions in the pathway protein modification; protein lipoylation via endogenous pathway; protein N(6)-(lipoyl)lysine from octanoyl-[acyl-carrier-protein]: step 2/2. Catalyzes the radical-mediated insertion of two sulfur atoms into the C-6 and C-8 positions of the octanoyl moiety bound to the lipoyl domains of lipoate-dependent enzymes, thereby converting the octanoylated domains into lipoylated derivatives. The polypeptide is Lipoyl synthase (Methylococcus capsulatus (strain ATCC 33009 / NCIMB 11132 / Bath)).